Here is a 230-residue protein sequence, read N- to C-terminus: uncharacterized protein (230 aa).

The N-terminal stretch at 1–22 is a signal peptide; that stretch reads MNIRSFLLISIFTAISYLVVDG. The Lumenal segment spans residues 23 to 167; the sequence is ATPRTFAPSA…YTPYGGVKAL (145 aa). Positions 55 to 90 are disordered; the sequence is SSSSSSSSISTSHDSQPSTSSSSPSSTSTSSSSGTS. Residues 168 to 188 form a helical membrane-spanning segment; it reads IGILVGVVVGSVFLLAIVMVI. The Cytoplasmic segment spans residues 189-230; that stretch reads ARIWGPRLLANKDQNNNNEDLDSNLVSKDSEGTPQITYASNF. The segment at 208–230 is disordered; the sequence is DLDSNLVSKDSEGTPQITYASNF.

The protein resides in the endoplasmic reticulum membrane. This is an uncharacterized protein from Schizosaccharomyces pombe (strain 972 / ATCC 24843) (Fission yeast).